The sequence spans 283 residues: N-terminal Xaa-Pro-Lys N-methyltransferase 2 (283 aa).

Residues glycine 124, arginine 129, aspartate 146, 174–175, and glutamine 190 contribute to the S-adenosyl-L-methionine site; that span reads LQ.

It belongs to the methyltransferase superfamily. NTM1 family.

The protein localises to the nucleus. The catalysed reaction is N-terminal L-alanyl-L-prolyl-L-lysyl-[protein] + S-adenosyl-L-methionine = N-terminal N-methyl-L-alanyl-L-prolyl-L-lysyl-[protein] + S-adenosyl-L-homocysteine + H(+). The enzyme catalyses N-terminal L-prolyl-L-prolyl-L-lysyl-[protein] + S-adenosyl-L-methionine = N-terminal N-methyl-L-prolyl-L-prolyl-L-lysyl-[protein] + S-adenosyl-L-homocysteine + H(+). It catalyses the reaction N-terminal L-seryl-L-prolyl-L-lysyl-[protein] + S-adenosyl-L-methionine = N-terminal N-methyl-L-seryl-L-prolyl-L-lysyl-[protein] + S-adenosyl-L-homocysteine + H(+). Alpha N-methyltransferase that methylates the N-terminus of target proteins containing the N-terminal motif [Ala/Pro/Ser]-Pro-Lys when the initiator Met is cleaved. Specifically catalyzes monomethylation of exposed alpha-amino group of Ala or Ser residue in the [Ala/Ser]-Pro-Lys motif and Pro in the Pro-Pro-Lys motif. Predominantly functions as a mono-methyltransferase but is also able to di-/tri-methylate the GPKRIA peptide and di-methylate the PPKRIA peptide (in vitro). May activate NTMT1 by priming its substrates for trimethylation. The sequence is that of N-terminal Xaa-Pro-Lys N-methyltransferase 2 (Ntmt2) from Mus musculus (Mouse).